Here is a 301-residue protein sequence, read N- to C-terminus: tRNA pseudouridine synthase B (301 aa).

Asp38 serves as the catalytic Nucleophile.

It belongs to the pseudouridine synthase TruB family. Type 1 subfamily.

It carries out the reaction uridine(55) in tRNA = pseudouridine(55) in tRNA. Functionally, responsible for synthesis of pseudouridine from uracil-55 in the psi GC loop of transfer RNAs. This Clostridioides difficile (strain 630) (Peptoclostridium difficile) protein is tRNA pseudouridine synthase B.